The chain runs to 305 residues: Phosphopantetheine adenylyltransferase (305 aa).

Belongs to the eukaryotic CoaD family.

The protein resides in the cytoplasm. It localises to the nucleus. The catalysed reaction is (R)-4'-phosphopantetheine + ATP + H(+) = 3'-dephospho-CoA + diphosphate. Its function is as follows. Reversibly transfers an adenylyl group from ATP to 4'-phosphopantetheine, yielding dephospho-CoA (dPCoA) and pyrophosphate. Plays a role in the physiological regulation of the intracellular CoA concentration. This Saccharomyces cerevisiae (strain ATCC 204508 / S288c) (Baker's yeast) protein is Phosphopantetheine adenylyltransferase (CAB4).